Reading from the N-terminus, the 233-residue chain is Orotidine 5'-phosphate decarboxylase (233 aa).

Substrate is bound by residues Asp12, Lys34, 61–70 (DWKLHDIGAT), Thr116, Arg181, Gln190, Gly210, and Arg211. Lys63 serves as the catalytic Proton donor.

The protein belongs to the OMP decarboxylase family. Type 1 subfamily. Homodimer.

The enzyme catalyses orotidine 5'-phosphate + H(+) = UMP + CO2. It participates in pyrimidine metabolism; UMP biosynthesis via de novo pathway; UMP from orotate: step 2/2. Its function is as follows. Catalyzes the decarboxylation of orotidine 5'-monophosphate (OMP) to uridine 5'-monophosphate (UMP). In Caulobacter vibrioides (strain ATCC 19089 / CIP 103742 / CB 15) (Caulobacter crescentus), this protein is Orotidine 5'-phosphate decarboxylase.